We begin with the raw amino-acid sequence, 734 residues long: Predicted GPI-anchored protein 49 (734 aa).

The first 16 residues, 1–16, serve as a signal peptide directing secretion; that stretch reads MNYITSLLLLSSNTFL. N-linked (GlcNAc...) asparagine glycans are attached at residues Asn27, Asn56, Asn68, and Asn71. The interval 78 to 145 is disordered; that stretch reads DNSDTDIDDS…NESDTQNEND (68 aa). Over residues 87 to 98 the composition is skewed to low complexity; that stretch reads SSSNSEDVSSND. Asn105, Asn118, Asn136, and Asn180 each carry an N-linked (GlcNAc...) asparagine glycan. Residues 110–129 show a composition bias toward acidic residues; that stretch reads FSDESDEGNDSDDNGDEVEN. Residues 130-141 are compositionally biased toward polar residues; it reads MENNQANESDTQ. 2 disordered regions span residues 216–262 and 331–360; these read SPKS…LKSK and DANPTEEYDSGDGKENTQQNPIPEKMRLPT. Residues 228-259 show a composition bias toward basic residues; that stretch reads SRKKTLKSKSKSKSSKLKHKSRKSHKRRPKLL. Residues Asn388 and Asn427 are each glycosylated (N-linked (GlcNAc...) asparagine). A disordered region spans residues 447-479; sequence PPRYSNHHSEFTVERPPRPSRTKKRPRIKAKKT. A compositionally biased stretch (basic and acidic residues) spans 453–463; the sequence is HHSEFTVERPP. The span at 464 to 479 shows a compositional bias: basic residues; it reads RPSRTKKRPRIKAKKT. Asn517 carries N-linked (GlcNAc...) asparagine glycosylation. The interval 582–653 is disordered; that stretch reads KPQETKLHSP…STTSTKPNDQ (72 aa). Residues 592–611 are compositionally biased toward low complexity; the sequence is TSTDTKSSKLMSSSSSNNNK. Residues 620-631 are compositionally biased toward polar residues; it reads EYNQTQESTSYN. N-linked (GlcNAc...) asparagine glycosylation is found at Asn622 and Asn631. Residues 632-650 show a composition bias toward low complexity; the sequence is TTKAVPKTSVVSSTTSTKP. Ser707 is lipidated: GPI-anchor amidated serine. Residues 708-734 constitute a propeptide, removed in mature form; it reads ASQNLSFSVLGLIILLLLLPGLLIIIM. An N-linked (GlcNAc...) asparagine glycan is attached at Asn711.

It localises to the cell membrane. The sequence is that of Predicted GPI-anchored protein 49 (PGA49) from Candida albicans (strain SC5314 / ATCC MYA-2876) (Yeast).